Here is a 270-residue protein sequence, read N- to C-terminus: D-aminoacyl-tRNA deacylase (270 aa).

It belongs to the DtdA deacylase family. Monomer. The cofactor is Zn(2+).

It carries out the reaction a D-aminoacyl-tRNA + H2O = a tRNA + a D-alpha-amino acid + H(+). The catalysed reaction is glycyl-tRNA(Ala) + H2O = tRNA(Ala) + glycine + H(+). In terms of biological role, D-aminoacyl-tRNA deacylase with broad substrate specificity. By recycling D-aminoacyl-tRNA to D-amino acids and free tRNA molecules, this enzyme counteracts the toxicity associated with the formation of D-aminoacyl-tRNA entities in vivo. The sequence is that of D-aminoacyl-tRNA deacylase from Pyrococcus furiosus (strain ATCC 43587 / DSM 3638 / JCM 8422 / Vc1).